A 43-amino-acid chain; its full sequence is Protein PsbN (43 aa).

A helical transmembrane segment spans residues Thr5–Phe27.

It belongs to the PsbN family.

It is found in the plastid. Its subcellular location is the chloroplast thylakoid membrane. Its function is as follows. May play a role in photosystem I and II biogenesis. In Sphagnum cuspidatum (Bog moss), this protein is Protein PsbN.